Consider the following 684-residue polypeptide: ATP-dependent DNA helicase RecG (684 aa).

The tract at residues Arg-51–His-148 is wedge domain. One can recognise a Helicase ATP-binding domain in the interval Asp-278–Ile-439. ATP is bound at residue Gly-291 to Thr-298. Positions Asp-392–His-395 match the DEAH box motif.

This sequence belongs to the helicase family. RecG subfamily. In terms of assembly, monomer.

The enzyme catalyses Couples ATP hydrolysis with the unwinding of duplex DNA by translocating in the 3'-5' direction.. It carries out the reaction ATP + H2O = ADP + phosphate + H(+). Functionally, plays a critical role in recombination and DNA repair. Helps process Holliday junction intermediates to mature products by catalyzing branch migration. Has replication fork regression activity, unwinds stalled or blocked replication forks to make a HJ that can be resolved. Has a DNA unwinding activity characteristic of a DNA helicase with 3'-5' polarity. This Acidithiobacillus ferridurans protein is ATP-dependent DNA helicase RecG.